A 394-amino-acid chain; its full sequence is Queuine tRNA-ribosyltransferase accessory subunit 2 (394 aa).

Positions 336, 338, 341, and 367 each coordinate Zn(2+).

It belongs to the queuine tRNA-ribosyltransferase family. QTRT2 subfamily. In terms of assembly, heterodimer of a catalytic subunit and an accessory subunit. The cofactor is Zn(2+).

The protein resides in the cytoplasm. In terms of biological role, non-catalytic subunit of the queuine tRNA-ribosyltransferase (TGT) that catalyzes the base-exchange of a guanine (G) residue with queuine (Q) at position 34 (anticodon wobble position) in tRNAs with GU(N) anticodons (tRNA-Asp, -Asn, -His and -Tyr), resulting in the hypermodified nucleoside queuosine (7-(((4,5-cis-dihydroxy-2-cyclopenten-1-yl)amino)methyl)-7-deazaguanosine). In Ixodes scapularis (Black-legged tick), this protein is Queuine tRNA-ribosyltransferase accessory subunit 2.